The following is a 716-amino-acid chain: ATP-dependent DNA helicase DinG (716 aa).

One can recognise a Helicase ATP-binding domain in the interval 17 to 294 (ALQEQIPDFI…TCMEQFRPKT (278 aa)). 54 to 61 (APTGVGKT) serves as a coordination point for ATP. Cysteine 120 is a [4Fe-4S] cluster binding site. The DEAH box motif lies at 131–134 (EPTQ). Residues cysteine 194, cysteine 199, and cysteine 205 each contribute to the [4Fe-4S] cluster site. The DEAH box motif lies at 248 to 251 (DEGH). The Helicase C-terminal domain occupies 517–698 (HIAEMAAFFR…VFPIEQPEVP (182 aa)).

Belongs to the helicase family. DinG subfamily. Type 1 sub-subfamily. It depends on [4Fe-4S] cluster as a cofactor.

The catalysed reaction is Couples ATP hydrolysis with the unwinding of duplex DNA at the replication fork by translocating in the 5'-3' direction. This creates two antiparallel DNA single strands (ssDNA). The leading ssDNA polymer is the template for DNA polymerase III holoenzyme which synthesizes a continuous strand.. It catalyses the reaction ATP + H2O = ADP + phosphate + H(+). Its function is as follows. DNA-dependent ATPase and 5'-3' DNA helicase. Unwinds D-loops, R-loops, forked DNA and G-quadruplex DNA. The chain is ATP-dependent DNA helicase DinG from Escherichia coli O157:H7.